The chain runs to 768 residues: Translation initiation factor IF-2, chloroplastic (768 aa).

Disordered stretches follow at residues 1-20 (MFLN…SNIN), 54-77 (KSES…DKKS), and 155-176 (KKVA…PPES). Positions 54 to 65 (KSESHTGGEQHL) are enriched in basic and acidic residues. Positions 160-176 (TPSQNSASIQSNSPPES) are enriched in polar residues. The tr-type G domain occupies 261-434 (KRPPIVTVMG…TLLAELEDLK (174 aa)). GTP contacts are provided by residues 270–277 (GHVDHGKT), 320–324 (DTPGH), and 374–377 (SKID).

Belongs to the TRAFAC class translation factor GTPase superfamily. Classic translation factor GTPase family. IF-2 subfamily.

The protein resides in the plastid. It localises to the chloroplast. One of the essential components for the initiation of protein synthesis. Protects formylmethionyl-tRNA from spontaneous hydrolysis and promotes its binding to the 30S ribosomal subunits. Also involved in the hydrolysis of GTP during the formation of the 70S ribosomal complex. This chain is Translation initiation factor IF-2, chloroplastic (infB), found in Pyropia yezoensis (Susabi-nori).